We begin with the raw amino-acid sequence, 459 residues long: Cyclin-dependent kinase F-4 (459 aa).

The Protein kinase domain occupies 4–283 (FKMIKEVGDG…AAEVLQHTFF (280 aa)). ATP-binding positions include 10–18 (VGDGTFGSV) and K33. Catalysis depends on D125, which acts as the Proton acceptor. S151 is modified (phosphoserine). T156 is subject to Phosphothreonine. Residues 310 to 397 (KGVSEHGMPR…RHSRSLPETG (88 aa)) are disordered. Composition is skewed to polar residues over residues 322-346 (STGTLSTTKPHSNASLKSSGLSKTG) and 366-375 (ESNNKLTTNR).

Belongs to the protein kinase superfamily. CMGC Ser/Thr protein kinase family. CDC2/CDKX subfamily.

The catalysed reaction is L-seryl-[protein] + ATP = O-phospho-L-seryl-[protein] + ADP + H(+). It carries out the reaction L-threonyl-[protein] + ATP = O-phospho-L-threonyl-[protein] + ADP + H(+). It catalyses the reaction [DNA-directed RNA polymerase] + ATP = phospho-[DNA-directed RNA polymerase] + ADP + H(+). This Oryza sativa subsp. japonica (Rice) protein is Cyclin-dependent kinase F-4 (CDKF-4).